The primary structure comprises 427 residues: MLDISYIRQNPEEVKEMLRRRQQSDDAPKVDRLLERDAERKAMVQRTDDLKALRNRVSKEIANIKRTGQGSGEELISQMKEVSDQIADLDLGLSTLEGEIEELLLTLPNKLHESVPEGRSADENILYKGPVSFEHNLDFPVKDHLELGKSLGLLDFERGAKITGAGFPVYTGKGARLERALINFMLDTHSANHGYTEVFPPFMVNKESLRGTGQWPKFADQVYHMPEDGLYAIPTAEVPVTNLHRGEMLEDDKLPIAYAAYSACFRREAGSYGKDTRGFLRVHQFNKVEMVRFTRPEKSYEALEEILSHAEAILCALKIPYRVITLCSGDISANAAKCYDIEVWSPAENKYLEASSVSNFEDYQARRSNIRFKPGGKGKPEFVHTLNGSGLATSRLMVSLLEHYQTADGKIMVPEVLRPYTGFDVIE.

Residue 235-237 (TAE) coordinates L-serine. ATP contacts are provided by residues 266–268 (RRE) and Val-282. Glu-289 serves as a coordination point for L-serine. 353-356 (EASS) contributes to the ATP binding site. Ser-389 provides a ligand contact to L-serine.

Belongs to the class-II aminoacyl-tRNA synthetase family. Type-1 seryl-tRNA synthetase subfamily. As to quaternary structure, homodimer. The tRNA molecule binds across the dimer.

The protein resides in the cytoplasm. It carries out the reaction tRNA(Ser) + L-serine + ATP = L-seryl-tRNA(Ser) + AMP + diphosphate + H(+). It catalyses the reaction tRNA(Sec) + L-serine + ATP = L-seryl-tRNA(Sec) + AMP + diphosphate + H(+). It functions in the pathway aminoacyl-tRNA biosynthesis; selenocysteinyl-tRNA(Sec) biosynthesis; L-seryl-tRNA(Sec) from L-serine and tRNA(Sec): step 1/1. Its function is as follows. Catalyzes the attachment of serine to tRNA(Ser). Is also able to aminoacylate tRNA(Sec) with serine, to form the misacylated tRNA L-seryl-tRNA(Sec), which will be further converted into selenocysteinyl-tRNA(Sec). The sequence is that of Serine--tRNA ligase from Chlorobaculum parvum (strain DSM 263 / NCIMB 8327) (Chlorobium vibrioforme subsp. thiosulfatophilum).